A 472-amino-acid polypeptide reads, in one-letter code: Protein hedgehog (472 aa).

Cys-84 carries N-palmitoyl cysteine lipidation. Positions 149, 154, 185, 188, and 190 each coordinate Ca(2+). Gly-256 is lipidated: Cholesterol glycine ester.

It belongs to the hedgehog family. In terms of assembly, interacts with shf. In terms of processing, the C-terminal part of the hedgehog protein precursor displays an autoproteolysis activity that results in the cleavage of the full-length protein into two parts (N-product and C-product). In addition, the C-terminal part displays a cholesterol transferase activity that results by the covalent attachment of a cholesterol moiety to the C-terminal of the newly generated N-product. The N-product is the active species in both local and long-range signaling, whereas the C-product has no signaling activity. Post-translationally, cholesterylation is required for N-product targeting to lipid rafts and multimerization. N-palmitoylation by Rasp of the hedgehog N-product, within the secretory pathway, is required for the embryonic and larval patterning activities of the hedgehog signal.

It localises to the nucleus. It is found in the cytoplasm. Its subcellular location is the cell membrane. The enzyme catalyses glycyl-L-cysteinyl-[protein] + cholesterol + H(+) = [protein]-C-terminal glycyl cholesterol ester + N-terminal L-cysteinyl-[protein]. Its function is as follows. The C-terminal part of the hedgehog protein precursor displays an autoproteolysis activity that results in the cleavage of the full-length protein into two parts (N-product and C-product). In addition, the C-terminal part displays a cholesterol transferase activity that results by the covalent attachment of a cholesterol moiety to the C-terminal of the newly generated N-product. Once cleaved, the C-product has no signaling activity and diffuses from the cell. In terms of biological role, the dually lipidated hedgehog protein N-product is a morphogen which is essential for a variety of patterning events during development. Establishes the anterior-posterior axis of the embryonic segments and patterns the larval imaginal disks. Binds to the patched (ptc) receptor, which functions in association with smoothened (smo), to activate the transcription of target genes wingless (wg), decapentaplegic (dpp) and ptc. In the absence of hh, ptc represses the constitutive signaling activity of smo through fused (fu). Essential component of a signaling pathway which regulates the Duox-dependent gut immune response to bacterial uracil; required to activate Cad99C-dependent endosome formation, norpA-dependent Ca2+ mobilization and p38 MAPK, which are essential steps in the Duox-dependent production of reactive oxygen species (ROS) in response to intestinal bacterial infection. During photoreceptor differentiation, it up-regulates transcription of Ubr3, which in turn promotes the hh-signaling pathway by mediating the ubiquitination and degradation of cos. In Drosophila ananassae (Fruit fly), this protein is Protein hedgehog.